A 333-amino-acid polypeptide reads, in one-letter code: L-asparagine oxygenase (333 aa).

L-asparagine-binding residues include E125 and N146. Fe cation is bound by residues H155 and E157. The L-asparagine site is built by E157 and N158. H287 is a Fe cation binding site. Residue R301 participates in 2-oxoglutarate binding. R305 provides a ligand contact to L-asparagine.

The protein belongs to the clavaminate synthase family. The cofactor is Fe(2+).

It catalyses the reaction L-asparagine + 2-oxoglutarate + O2 = (2S,3S)-3-hydroxyasparagine + succinate + CO2. The protein operates within antibiotic biosynthesis; calcium-dependent antibiotic biosynthesis. Its function is as follows. Catalyzes the 3-hydroxylation of L-asparagine to (2S,3S)-3-hydroxyasparagine. The 3-hydroxylated asparagine produced is incorporated at position 9 during the biosynthesis of the non-ribosomally synthesized calcium-dependent antibiotic (CDA), a 11-residue acidic lipopeptide lactone. Is able to hydroxylate only free L-asparagine, since it hydroxylates neither a CDA analog with unmodified Asn at position 9 nor a peptidyl-carrier-protein (PCP)-bound asparagine. Is not active toward D-asparagine. This chain is L-asparagine oxygenase (asnO), found in Streptomyces coelicolor (strain ATCC BAA-471 / A3(2) / M145).